A 153-amino-acid polypeptide reads, in one-letter code: Large ribosomal subunit protein uL22 (153 aa).

The tract at residues 128-153 is disordered; that stretch reads ADRRARRAAAKPAASASPAANEGVPA. The span at 137–147 shows a compositional bias: low complexity; the sequence is AKPAASASPAA.

Belongs to the universal ribosomal protein uL22 family. In terms of assembly, part of the 50S ribosomal subunit.

Its function is as follows. This protein binds specifically to 23S rRNA; its binding is stimulated by other ribosomal proteins, e.g. L4, L17, and L20. It is important during the early stages of 50S assembly. It makes multiple contacts with different domains of the 23S rRNA in the assembled 50S subunit and ribosome. The globular domain of the protein is located near the polypeptide exit tunnel on the outside of the subunit, while an extended beta-hairpin is found that lines the wall of the exit tunnel in the center of the 70S ribosome. The sequence is that of Large ribosomal subunit protein uL22 from Acidiphilium cryptum (strain JF-5).